A 431-amino-acid chain; its full sequence is Glutamyl-tRNA(Gln) amidotransferase subunit A (431 aa).

Catalysis depends on charge relay system residues Lys-55 and Ser-130. Catalysis depends on Ser-154, which acts as the Acyl-ester intermediate.

Belongs to the amidase family. GatA subfamily. As to quaternary structure, heterotrimer of A, B and C subunits.

The catalysed reaction is L-glutamyl-tRNA(Gln) + L-glutamine + ATP + H2O = L-glutaminyl-tRNA(Gln) + L-glutamate + ADP + phosphate + H(+). In terms of biological role, allows the formation of correctly charged Gln-tRNA(Gln) through the transamidation of misacylated Glu-tRNA(Gln) in organisms which lack glutaminyl-tRNA synthetase. The reaction takes place in the presence of glutamine and ATP through an activated gamma-phospho-Glu-tRNA(Gln). This is Glutamyl-tRNA(Gln) amidotransferase subunit A from Methanococcus maripaludis (strain C5 / ATCC BAA-1333).